A 182-amino-acid chain; its full sequence is MRILGIDPGLQIAGFGVVEVDGPHLHYVASGTIKTTHMVRGDLPARLKVLFDGVREVVQRYQPDMASVEIVFTNVNPQATLLLGQARGACITALVSSDLTVAEYTALQMKKAVAGYGKAGKAEVQQMVMRLLKLPALPGKDAADALGLAITHAHAGRSTAILAAATALKPNASASYKAGRHY.

Residues Asp-7, Glu-69, and Asp-141 contribute to the active site. Mg(2+)-binding residues include Asp-7, Glu-69, and Asp-141.

This sequence belongs to the RuvC family. As to quaternary structure, homodimer which binds Holliday junction (HJ) DNA. The HJ becomes 2-fold symmetrical on binding to RuvC with unstacked arms; it has a different conformation from HJ DNA in complex with RuvA. In the full resolvosome a probable DNA-RuvA(4)-RuvB(12)-RuvC(2) complex forms which resolves the HJ. It depends on Mg(2+) as a cofactor.

It is found in the cytoplasm. The enzyme catalyses Endonucleolytic cleavage at a junction such as a reciprocal single-stranded crossover between two homologous DNA duplexes (Holliday junction).. Its function is as follows. The RuvA-RuvB-RuvC complex processes Holliday junction (HJ) DNA during genetic recombination and DNA repair. Endonuclease that resolves HJ intermediates. Cleaves cruciform DNA by making single-stranded nicks across the HJ at symmetrical positions within the homologous arms, yielding a 5'-phosphate and a 3'-hydroxyl group; requires a central core of homology in the junction. The consensus cleavage sequence is 5'-(A/T)TT(C/G)-3'. Cleavage occurs on the 3'-side of the TT dinucleotide at the point of strand exchange. HJ branch migration catalyzed by RuvA-RuvB allows RuvC to scan DNA until it finds its consensus sequence, where it cleaves and resolves the cruciform DNA. This is Crossover junction endodeoxyribonuclease RuvC from Polaromonas sp. (strain JS666 / ATCC BAA-500).